Reading from the N-terminus, the 140-residue chain is Small ribosomal subunit protein uS12 (140 aa).

The segment at 33 to 55 (KEQTNVSSPQKRGVCTRVGTMTP) is disordered. A 3-methylthioaspartic acid modification is found at D102.

It belongs to the universal ribosomal protein uS12 family. Part of the 30S ribosomal subunit. Contacts proteins S8 and S17. May interact with IF1 in the 30S initiation complex.

Its function is as follows. With S4 and S5 plays an important role in translational accuracy. Functionally, interacts with and stabilizes bases of the 16S rRNA that are involved in tRNA selection in the A site and with the mRNA backbone. Located at the interface of the 30S and 50S subunits, it traverses the body of the 30S subunit contacting proteins on the other side and probably holding the rRNA structure together. The combined cluster of proteins S8, S12 and S17 appears to hold together the shoulder and platform of the 30S subunit. The sequence is that of Small ribosomal subunit protein uS12 from Geobacillus thermodenitrificans (strain NG80-2).